A 443-amino-acid chain; its full sequence is Cyclin-A2-1 (443 aa).

The segment covering 1-10 (MHRASSKHTN) has biased composition (basic residues). A disordered region spans residues 1 to 61 (MHRASSKHTN…KRVARPSNKR (61 aa)). The span at 11 to 25 (AKKEAISTSKIRDNN) shows a compositional bias: basic and acidic residues.

Belongs to the cyclin family. Cyclin AB subfamily. As to expression, expressed in tissues with active cell division: apical root and shoot meristems, lateral root and leaf primordia, floral meristems and developing pollen.

May negatively regulate endocycles and act as a regulator of ploidy levels in endoreduplication. The sequence is that of Cyclin-A2-1 (CYCA2-1) from Arabidopsis thaliana (Mouse-ear cress).